We begin with the raw amino-acid sequence, 628 residues long: uncharacterized protein (628 aa).

Disordered regions lie at residues 1-65 (MDTN…ISSA) and 80-125 (SLRN…VSLS). The span at 12 to 21 (ISPSIASSFP) shows a compositional bias: low complexity. Polar residues predominate over residues 25–37 (PFSSQNSTTSNPE). 2 stretches are compositionally biased toward low complexity: residues 48 to 64 (SSIIISQQPLSPSNISS) and 87 to 102 (SPHIPSPSSFSSSSSS). Residues 103 to 116 (DLDKSMLDEKHPDS) show a composition bias toward basic and acidic residues. The next 12 helical transmembrane spans lie at 157 to 177 (IITCLWITYFLSRSVTYSISL), 203 to 223 (VGTGLSYVSLIIFDLPSNLLM), 230 to 250 (LWLSRIQVTTGIIGACHAVLG), 259 to 279 (FIALRFFNGLAIAGMWPGFAF), 294 to 314 (IGWYYTAAQISSVATSLLSAA), 324 to 344 (LYGYQWMFLIWGVVAFTQGLF), 417 to 437 (LWPPIFMFFGVVGISNGLVNY), 454 to 474 (VSLLVAPIWVFDAIAILTVLP), 483 to 503 (MLFFVGSCLFVLAGLLITTFV), 511 to 531 (VGLLILGFGLGPTVPIIMTWV), 542 to 562 (VGVAAGLAIVSGLGNLGSVVA), and 583 to 603 (MCGMVGIAIVASIVMHMVQKF).

It belongs to the major facilitator superfamily. Allantoate permease family.

It is found in the membrane. This is an uncharacterized protein from Schizosaccharomyces pombe (strain 972 / ATCC 24843) (Fission yeast).